The primary structure comprises 648 residues: Bifunctional protein TilS/HprT (648 aa).

ATP is bound at residue Ser29 to Ser34. Asp627 is a Mg(2+) binding site.

This sequence in the N-terminal section; belongs to the tRNA(Ile)-lysidine synthase family. In the C-terminal section; belongs to the purine/pyrimidine phosphoribosyltransferase family. Requires Mg(2+) as cofactor.

Its subcellular location is the cytoplasm. It carries out the reaction IMP + diphosphate = hypoxanthine + 5-phospho-alpha-D-ribose 1-diphosphate. The catalysed reaction is GMP + diphosphate = guanine + 5-phospho-alpha-D-ribose 1-diphosphate. It catalyses the reaction cytidine(34) in tRNA(Ile2) + L-lysine + ATP = lysidine(34) in tRNA(Ile2) + AMP + diphosphate + H(+). In terms of biological role, ligates lysine onto the cytidine present at position 34 of the AUA codon-specific tRNA(Ile) that contains the anticodon CAU, in an ATP-dependent manner. Cytidine is converted to lysidine, thus changing the amino acid specificity of the tRNA from methionine to isoleucine. This chain is Bifunctional protein TilS/HprT (tilS/hprT), found in Listeria monocytogenes serotype 4b (strain F2365).